The primary structure comprises 146 residues: Small ribosomal subunit protein uS9 (146 aa).

Ser-3 is subject to Phosphoserine. Lys-60 bears the N6-acetyllysine mark.

It belongs to the universal ribosomal protein uS9 family. As to quaternary structure, component of the small ribosomal subunit. Part of the small subunit (SSU) processome, composed of more than 70 proteins and the RNA chaperone small nucleolar RNA (snoRNA) U3.

Its subcellular location is the cytoplasm. It localises to the nucleus. It is found in the nucleolus. Component of the small ribosomal subunit. The ribosome is a large ribonucleoprotein complex responsible for the synthesis of proteins in the cell. Part of the small subunit (SSU) processome, first precursor of the small eukaryotic ribosomal subunit. During the assembly of the SSU processome in the nucleolus, many ribosome biogenesis factors, an RNA chaperone and ribosomal proteins associate with the nascent pre-rRNA and work in concert to generate RNA folding, modifications, rearrangements and cleavage as well as targeted degradation of pre-ribosomal RNA by the RNA exosome. The protein is Small ribosomal subunit protein uS9 (RPS16) of Bos taurus (Bovine).